We begin with the raw amino-acid sequence, 495 residues long: Serine/threonine-protein kinase STN8, chloroplastic (495 aa).

The transit peptide at 1–49 directs the protein to the chloroplast; that stretch reads MASLLSPATPTATSAAFHSCSTAGFSTPTHISSQNSSLSLLSRRGCMMR. In terms of domain architecture, Protein kinase spans 133 to 477; that stretch reads FLVTEKLGEG…AAAALRHPYF (345 aa). Residues 139–147 and Lys-186 contribute to the ATP site; that span reads LGEGSFGVV. The active-site Proton acceptor is Asp-308.

Belongs to the protein kinase superfamily. Ser/Thr protein kinase family.

It is found in the plastid. Its subcellular location is the chloroplast thylakoid. The enzyme catalyses L-seryl-[protein] + ATP = O-phospho-L-seryl-[protein] + ADP + H(+). It carries out the reaction L-threonyl-[protein] + ATP = O-phospho-L-threonyl-[protein] + ADP + H(+). In terms of biological role, light-dependent serine/threonine protein kinase that specifically phosphorylates N-terminal threonine residues in psbA/D1, psbD/D2, psbC/CP43 and psbH, which are components of the core antenna complex of photosystem II. Phosphorylation of PSII core components facilitates the exchange of chlorophyll proteins between the grana and the stroma lamellae. Also involved in the phosphorylation of the calcium-sensing receptor (CaS). The protein is Serine/threonine-protein kinase STN8, chloroplastic (STN8) of Arabidopsis thaliana (Mouse-ear cress).